A 492-amino-acid chain; its full sequence is MTLWINGDWITGQGASRVKRNPVSGEVLWQGNDADAAQVEQACRAARAAFPRWARLSLAERQVVVERFAGLLESNKAELTAIIARETGKPRWEAATEVTAMINKIAISIKAYHVRTGEQRSEMPDGAASLRHRPHGVLAVFGPYNFPGHLPNGHIVPALLAGNTIIFKPSELTPWSGEAVMRLWQQAGLPPGVLNLVQGGRETGQALSALEDLDGLLFTGRANTGYQLHRQLSGQPEKILALEMGGNNPLIIDEVADIDAAVHLTIQSAFVTAGQRCTCARRLLLKSGAQGDAFLARLVAVSQRLTPGNWDDEPQPFIGGLISEQAAQQVVTAWQQLEAMGGRTLLAPRLLQSETSLLTPGIIEMTGVAGVPDEEVFGPLLRVWRYDSFEEAILMANNTRFGLSCGLVSPEREKFDQLLLEARAGIVNWNKPLTGAASTAPFGGIGASGNHRPSAWYAADYCAWPMASLESDSLTLPATLNPGLDFSDEVVR.

220–225 (GRANTG) contributes to the NAD(+) binding site. Residues Glu-243 and Cys-277 contribute to the active site.

The protein belongs to the aldehyde dehydrogenase family. AstD subfamily.

The enzyme catalyses N-succinyl-L-glutamate 5-semialdehyde + NAD(+) + H2O = N-succinyl-L-glutamate + NADH + 2 H(+). The protein operates within amino-acid degradation; L-arginine degradation via AST pathway; L-glutamate and succinate from L-arginine: step 4/5. Functionally, catalyzes the NAD-dependent reduction of succinylglutamate semialdehyde into succinylglutamate. This Shigella boydii serotype 18 (strain CDC 3083-94 / BS512) protein is N-succinylglutamate 5-semialdehyde dehydrogenase.